A 453-amino-acid chain; its full sequence is Plasmepsin II (453 aa).

Over 1 to 37 the chain is Cytoplasmic; it reads MDITVREHDFKHGFIKSNSTFDGLNIDNSKNKKKIQK. The propeptide occupies 1–124; sequence MDITVREHDF…SGLTKTNYLG (124 aa). A helical; Signal-anchor for type II membrane protein membrane pass occupies residues 38-58; that stretch reads GFQILYVLLFCSVMCGLFYYV. Over 59 to 453 the chain is Lumenal; that stretch reads YENVWLQRDN…VGIALAKKNL (395 aa). In terms of domain architecture, Peptidase A1 spans 140 to 447; it reads FYGDAEVGDN…DYDNQSVGIA (308 aa). Aspartate 158 is an active-site residue. A disulfide bond links cysteine 171 and cysteine 176. Aspartate 338 is an active-site residue. Cysteine 373 and cysteine 409 are joined by a disulfide.

This sequence belongs to the peptidase A1 family. Component of the hemozoin formation complex (HFC) composed of falcipains FP2A and/or FP2B, plasmepsins PMII, PMIII/HAP and PMIV, heme detoxifying protein HDP and falcilysin FLN. The HFC complex is involved in hemoglobin degradation and detoxification of heme in the food vacuole during the asexual blood stage. Post-translationally, not N-glycosylated. In terms of processing, proteolytically cleaved into the soluble active mature form in the digestive vacuole by cysteine protease falcipains; the process begins at the early ring stage. Proteolysis requires an acidic environment. In absence of falcipains, autoprocessing may serve as an alternate activation system.

Its subcellular location is the membrane. It localises to the vacuole lumen. The protein resides in the vacuole membrane. It carries out the reaction Hydrolysis of the bonds linking certain hydrophobic residues in hemoglobin or globin. Also cleaves small molecules substrates such as Ala-Leu-Glu-Arg-Thr-Phe-|-Phe(NO2)-Ser-Phe-Pro-Thr.. Its activity is regulated as follows. Inhibited by pepstatin A. Inhibited by KNI derived compounds (KNI-10742, 10743, 10395, 10333, and 10343). Its function is as follows. During the asexual blood stage, participates in initial cleavage of native host hemoglobin (Hb) resulting in Hb denaturation. May cleave preferentially denatured hemoglobin that has been cleaved by PMI. Digestion of host Hb is an essential step which provides the parasite with amino acids for protein synthesis, and regulates osmolarity. The chain is Plasmepsin II from Plasmodium falciparum (isolate 3D7).